The primary structure comprises 98 residues: NADH-ubiquinone oxidoreductase chain 4L (98 aa).

3 consecutive transmembrane segments (helical) span residues 1-21 (MSMVYINIFLAFTMSLMGLLM), 29-49 (SLLCLEGMMLSLFIMMAVAIL), and 61-81 (IILLVFAACEAALGLSLLVMV).

This sequence belongs to the complex I subunit 4L family. In terms of assembly, core subunit of respiratory chain NADH dehydrogenase (Complex I) which is composed of 45 different subunits.

The protein resides in the mitochondrion inner membrane. The catalysed reaction is a ubiquinone + NADH + 5 H(+)(in) = a ubiquinol + NAD(+) + 4 H(+)(out). In terms of biological role, core subunit of the mitochondrial membrane respiratory chain NADH dehydrogenase (Complex I) which catalyzes electron transfer from NADH through the respiratory chain, using ubiquinone as an electron acceptor. Part of the enzyme membrane arm which is embedded in the lipid bilayer and involved in proton translocation. The polypeptide is NADH-ubiquinone oxidoreductase chain 4L (MT-ND4L) (Puma concolor (Mountain lion)).